We begin with the raw amino-acid sequence, 318 residues long: C1GALT1-specific chaperone 1 (318 aa).

Residues 1–6 (MLSESS) are Cytoplasmic-facing. A helical; Signal-anchor for type II membrane protein membrane pass occupies residues 7–26 (SFLKGVMLGSIFCALITMLG). At 27–318 (HIRIGHGSRM…FLPPNGSDND (292 aa)) the chain is on the lumenal side.

The protein belongs to the glycosyltransferase 31 family. Beta3-Gal-T subfamily. As to quaternary structure, associates with core 1 beta-3-galactosyltransferase (C1GALT1), probably not with the soluble active form.

The protein resides in the membrane. In terms of biological role, probable chaperone required for the generation of 1 O-glycan Gal-beta1-3GalNAc-alpha1-Ser/Thr (T antigen), which is a precursor for many extended O-glycans in glycoproteins. Probably acts as a specific molecular chaperone assisting the folding/stability of core 1 beta-3-galactosyltransferase (C1GALT1). The sequence is that of C1GALT1-specific chaperone 1 (C1GALT1C1) from Bos taurus (Bovine).